Here is a 558-residue protein sequence, read N- to C-terminus: Eukaryotic translation initiation factor 3 subunit D (558 aa).

An RNA gate region spans residues 296–310 (EFDLLTVNETSVEPP). Residues 534-558 (DNTFESEGEEEDSDEEEQVKDAFQR) are disordered. Positions 537-551 (FESEGEEEDSDEEEQ) are enriched in acidic residues.

It belongs to the eIF-3 subunit D family. In terms of assembly, component of the eukaryotic translation initiation factor 3 (eIF-3) complex.

The protein localises to the cytoplasm. MRNA cap-binding component of the eukaryotic translation initiation factor 3 (eIF-3) complex, which is involved in protein synthesis of a specialized repertoire of mRNAs and, together with other initiation factors, stimulates binding of mRNA and methionyl-tRNAi to the 40S ribosome. The eIF-3 complex specifically targets and initiates translation of a subset of mRNAs involved in cell proliferation. In the eIF-3 complex, eif3d specifically recognizes and binds the 7-methylguanosine cap of a subset of mRNAs. The chain is Eukaryotic translation initiation factor 3 subunit D from Nasonia vitripennis (Parasitic wasp).